A 259-amino-acid chain; its full sequence is Glucosamine-6-phosphate deaminase (259 aa).

The Proton acceptor; for enolization step role is filled by D66. The active-site For ring-opening step is the D135. The Proton acceptor; for ring-opening step role is filled by H137. The active-site For ring-opening step is E142.

Belongs to the glucosamine/galactosamine-6-phosphate isomerase family. NagB subfamily.

The enzyme catalyses alpha-D-glucosamine 6-phosphate + H2O = beta-D-fructose 6-phosphate + NH4(+). Its pathway is amino-sugar metabolism; N-acetylneuraminate degradation; D-fructose 6-phosphate from N-acetylneuraminate: step 5/5. Catalyzes the reversible isomerization-deamination of glucosamine 6-phosphate (GlcN6P) to form fructose 6-phosphate (Fru6P) and ammonium ion. In Rhodococcus jostii (strain RHA1), this protein is Glucosamine-6-phosphate deaminase.